Reading from the N-terminus, the 92-residue chain is Small ribosomal subunit protein uS17 (92 aa).

The protein belongs to the universal ribosomal protein uS17 family. In terms of assembly, part of the 30S ribosomal subunit.

In terms of biological role, one of the primary rRNA binding proteins, it binds specifically to the 5'-end of 16S ribosomal RNA. This chain is Small ribosomal subunit protein uS17, found in Cupriavidus pinatubonensis (strain JMP 134 / LMG 1197) (Cupriavidus necator (strain JMP 134)).